Consider the following 342-residue polypeptide: MTTLTITRPDDWHVHLRDGEVLKDTVRDISRYNGRALIMPNTVPPVTNTEMALAYRDRILKEQHGEQFEPLMALYLTDNTTPEEIRAAKATGKIVAAKLYPAGATTNSDSGVTDAKNIYHVLEAMEEVGMLLLVHGEVTHHHVDIFDREKEFLDTVLAPIVNDFPNLKIVLEHITTADAAQFVNNASDNVAATITAHHLLFNRNHMLVGGIKPHFYCLPILKRNTHQQALIEAATSGSKKFFLGTDSAPHAKGAKESACGCAGSYTAHAALELYAEVFEKEGKLENLEAFASFNGPDFYGIARNADTVTLEKSAWDVPESMPFGNDIVVPIRANEQIEWKVK.

Positions 13 and 15 each coordinate Zn(2+). Substrate-binding positions include His15–Arg17 and Asn41. Lys98, His135, and His173 together coordinate Zn(2+). Lys98 is modified (N6-carboxylysine). His135 contributes to the substrate binding site. Leu218 provides a ligand contact to substrate. Position 246 (Asp246) interacts with Zn(2+). The active site involves Asp246. Substrate-binding residues include His250 and Ala262.

It belongs to the metallo-dependent hydrolases superfamily. DHOase family. Class II DHOase subfamily. As to quaternary structure, homodimer. Zn(2+) is required as a cofactor.

The enzyme catalyses (S)-dihydroorotate + H2O = N-carbamoyl-L-aspartate + H(+). Its pathway is pyrimidine metabolism; UMP biosynthesis via de novo pathway; (S)-dihydroorotate from bicarbonate: step 3/3. Functionally, catalyzes the reversible cyclization of carbamoyl aspartate to dihydroorotate. The sequence is that of Dihydroorotase from Vibrio parahaemolyticus serotype O3:K6 (strain RIMD 2210633).